The primary structure comprises 355 residues: Lipopolysaccharide heptosyltransferase 1 (355 aa).

Threonine 186, threonine 187, lysine 191, glutamate 221, aspartate 260, threonine 261, glycine 262, and histidine 265 together coordinate ADP-L-glycero-beta-D-manno-heptose.

The protein belongs to the glycosyltransferase 9 family.

Its subcellular location is the cell inner membrane. It carries out the reaction an alpha-Kdo-(2-&gt;4)-alpha-Kdo-(2-&gt;6)-lipid A + ADP-L-glycero-beta-D-manno-heptose = an L-alpha-D-Hep-(1-&gt;5)-[alpha-Kdo-(2-&gt;4)]-alpha-Kdo-(2-&gt;6)-lipid A + ADP + H(+). Its pathway is bacterial outer membrane biogenesis; LPS core biosynthesis. In terms of biological role, glycosyltransferase involved in the biosynthesis of the core oligosaccharide region of lipopolysaccharide (LPS). Catalyzes the addition of the first heptose unit to one 3-deoxy-D-manno-octulosonic acid (Kdo) residue of the Kdo2-lipid A module. The chain is Lipopolysaccharide heptosyltransferase 1 from Pseudomonas aeruginosa (strain ATCC 15692 / DSM 22644 / CIP 104116 / JCM 14847 / LMG 12228 / 1C / PRS 101 / PAO1).